A 219-amino-acid polypeptide reads, in one-letter code: Thiamine-phosphate synthase (219 aa).

4-amino-2-methyl-5-(diphosphooxymethyl)pyrimidine is bound by residues 44–48 (QLREK) and N79. Residues D80 and D99 each contribute to the Mg(2+) site. Position 117 (S117) interacts with 4-amino-2-methyl-5-(diphosphooxymethyl)pyrimidine. 143 to 145 (TST) is a 2-[(2R,5Z)-2-carboxy-4-methylthiazol-5(2H)-ylidene]ethyl phosphate binding site. K146 is a 4-amino-2-methyl-5-(diphosphooxymethyl)pyrimidine binding site. Residues G175 and 195–196 (IS) each bind 2-[(2R,5Z)-2-carboxy-4-methylthiazol-5(2H)-ylidene]ethyl phosphate.

The protein belongs to the thiamine-phosphate synthase family. The cofactor is Mg(2+).

The enzyme catalyses 2-[(2R,5Z)-2-carboxy-4-methylthiazol-5(2H)-ylidene]ethyl phosphate + 4-amino-2-methyl-5-(diphosphooxymethyl)pyrimidine + 2 H(+) = thiamine phosphate + CO2 + diphosphate. It carries out the reaction 2-(2-carboxy-4-methylthiazol-5-yl)ethyl phosphate + 4-amino-2-methyl-5-(diphosphooxymethyl)pyrimidine + 2 H(+) = thiamine phosphate + CO2 + diphosphate. It catalyses the reaction 4-methyl-5-(2-phosphooxyethyl)-thiazole + 4-amino-2-methyl-5-(diphosphooxymethyl)pyrimidine + H(+) = thiamine phosphate + diphosphate. It functions in the pathway cofactor biosynthesis; thiamine diphosphate biosynthesis; thiamine phosphate from 4-amino-2-methyl-5-diphosphomethylpyrimidine and 4-methyl-5-(2-phosphoethyl)-thiazole: step 1/1. Condenses 4-methyl-5-(beta-hydroxyethyl)thiazole monophosphate (THZ-P) and 2-methyl-4-amino-5-hydroxymethyl pyrimidine pyrophosphate (HMP-PP) to form thiamine monophosphate (TMP). In Bacillus mycoides (strain KBAB4) (Bacillus weihenstephanensis), this protein is Thiamine-phosphate synthase.